Reading from the N-terminus, the 627-residue chain is uncharacterized protein (627 aa).

Residues 21–136 (GISASDKILS…NSVCKRQTRS (116 aa)) form the WH1 domain. The interval 310–347 (RGSLSTPRIPTHRDSYRSATKPDTVPKQTPPPTHNSYV) is disordered.

This is an uncharacterized protein from Caenorhabditis elegans.